A 187-amino-acid polypeptide reads, in one-letter code: UPF0232 protein MUL_0004 (187 aa).

Positions 1 to 12 are enriched in gly residues; the sequence is MNGDGEQPGPGD. 2 disordered regions span residues 1 to 77 and 166 to 187; these read MNGD…QPLG and ASPS…DTYG. The segment covering 14–30 has biased composition (basic and acidic residues); sequence AARDELPSMDLVRRTLA. Residues 31-55 show a composition bias toward low complexity; sequence EARAAARARGQDPGRGFAAGPAPRR.

Belongs to the UPF0232 family.

This chain is UPF0232 protein MUL_0004, found in Mycobacterium ulcerans (strain Agy99).